We begin with the raw amino-acid sequence, 515 residues long: Bifunctional purine biosynthesis protein PurH (515 aa).

The 145-residue stretch at 1–145 (MTKRALISVS…KNHASVTVVV (145 aa)) folds into the MGS-like domain.

Belongs to the PurH family.

The enzyme catalyses (6R)-10-formyltetrahydrofolate + 5-amino-1-(5-phospho-beta-D-ribosyl)imidazole-4-carboxamide = 5-formamido-1-(5-phospho-D-ribosyl)imidazole-4-carboxamide + (6S)-5,6,7,8-tetrahydrofolate. It catalyses the reaction IMP + H2O = 5-formamido-1-(5-phospho-D-ribosyl)imidazole-4-carboxamide. Its pathway is purine metabolism; IMP biosynthesis via de novo pathway; 5-formamido-1-(5-phospho-D-ribosyl)imidazole-4-carboxamide from 5-amino-1-(5-phospho-D-ribosyl)imidazole-4-carboxamide (10-formyl THF route): step 1/1. The protein operates within purine metabolism; IMP biosynthesis via de novo pathway; IMP from 5-formamido-1-(5-phospho-D-ribosyl)imidazole-4-carboxamide: step 1/1. This Streptococcus thermophilus (strain ATCC BAA-491 / LMD-9) protein is Bifunctional purine biosynthesis protein PurH.